The primary structure comprises 477 residues: Pup--protein ligase (477 aa).

E16 is a Mg(2+) binding site. Position 60 (R60) interacts with ATP. A Mg(2+)-binding site is contributed by Y62. D64 serves as the catalytic Proton acceptor. E70 is a binding site for Mg(2+). 2 residues coordinate ATP: T73 and W441.

Belongs to the Pup ligase/Pup deamidase family. Pup-conjugating enzyme subfamily.

The catalysed reaction is ATP + [prokaryotic ubiquitin-like protein]-L-glutamate + [protein]-L-lysine = ADP + phosphate + N(6)-([prokaryotic ubiquitin-like protein]-gamma-L-glutamyl)-[protein]-L-lysine.. Its pathway is protein degradation; proteasomal Pup-dependent pathway. It participates in protein modification; protein pupylation. Functionally, catalyzes the covalent attachment of the prokaryotic ubiquitin-like protein modifier Pup to the proteasomal substrate proteins, thereby targeting them for proteasomal degradation. This tagging system is termed pupylation. The ligation reaction involves the side-chain carboxylate of the C-terminal glutamate of Pup and the side-chain amino group of a substrate lysine. The polypeptide is Pup--protein ligase (Corynebacterium kroppenstedtii (strain DSM 44385 / JCM 11950 / CIP 105744 / CCUG 35717)).